The chain runs to 252 residues: Imidazole glycerol phosphate synthase subunit HisF (252 aa).

Active-site residues include Asp11 and Asp130.

Belongs to the HisA/HisF family. Heterodimer of HisH and HisF.

The protein resides in the cytoplasm. The enzyme catalyses 5-[(5-phospho-1-deoxy-D-ribulos-1-ylimino)methylamino]-1-(5-phospho-beta-D-ribosyl)imidazole-4-carboxamide + L-glutamine = D-erythro-1-(imidazol-4-yl)glycerol 3-phosphate + 5-amino-1-(5-phospho-beta-D-ribosyl)imidazole-4-carboxamide + L-glutamate + H(+). Its pathway is amino-acid biosynthesis; L-histidine biosynthesis; L-histidine from 5-phospho-alpha-D-ribose 1-diphosphate: step 5/9. IGPS catalyzes the conversion of PRFAR and glutamine to IGP, AICAR and glutamate. The HisF subunit catalyzes the cyclization activity that produces IGP and AICAR from PRFAR using the ammonia provided by the HisH subunit. This chain is Imidazole glycerol phosphate synthase subunit HisF, found in Bacillus cereus (strain ATCC 10987 / NRS 248).